The primary structure comprises 259 residues: 5'-nucleotidase SurE (259 aa).

Asp-11, Asp-12, Ser-42, and Asn-99 together coordinate a divalent metal cation.

Belongs to the SurE nucleotidase family. It depends on a divalent metal cation as a cofactor.

The protein localises to the cytoplasm. The catalysed reaction is a ribonucleoside 5'-phosphate + H2O = a ribonucleoside + phosphate. In terms of biological role, nucleotidase that shows phosphatase activity on nucleoside 5'-monophosphates. This is 5'-nucleotidase SurE from Cytophaga hutchinsonii (strain ATCC 33406 / DSM 1761 / CIP 103989 / NBRC 15051 / NCIMB 9469 / D465).